The primary structure comprises 488 residues: Glutamate--tRNA ligase (488 aa).

The 'HIGH' region motif lies at Pro-11–Asn-21. Zn(2+) is bound by residues Cys-108, Cys-110, Cys-135, and Asp-137. Positions Lys-252–Arg-256 match the 'KMSKS' region motif. Lys-255 is a binding site for ATP.

This sequence belongs to the class-I aminoacyl-tRNA synthetase family. Glutamate--tRNA ligase type 1 subfamily. In terms of assembly, monomer. Requires Zn(2+) as cofactor.

It localises to the cytoplasm. The enzyme catalyses tRNA(Glu) + L-glutamate + ATP = L-glutamyl-tRNA(Glu) + AMP + diphosphate. In terms of biological role, catalyzes the attachment of glutamate to tRNA(Glu) in a two-step reaction: glutamate is first activated by ATP to form Glu-AMP and then transferred to the acceptor end of tRNA(Glu). The protein is Glutamate--tRNA ligase of Natranaerobius thermophilus (strain ATCC BAA-1301 / DSM 18059 / JW/NM-WN-LF).